A 267-amino-acid polypeptide reads, in one-letter code: Diacetylchitobiose deacetylase (267 aa).

It belongs to the PIGL family. In terms of assembly, homohexamer.

The protein resides in the cytoplasm. It carries out the reaction N,N'-diacetylchitobiose + H2O = beta-D-glucosaminyl-(1-&gt;4)-N-acetyl-D-glucosamine + acetate. It participates in glycan degradation; chitin degradation. Functionally, deacylates the non-reducing end of diacetylchitobiose (GlcNAc2). Can also use N-acetylglucosamine (GlcNAc) and N-acetylchitotriose (GlcNAc3). Probably involved in chitin degradation. The protein is Diacetylchitobiose deacetylase (dac) of Thermococcus kodakarensis (strain ATCC BAA-918 / JCM 12380 / KOD1) (Pyrococcus kodakaraensis (strain KOD1)).